Reading from the N-terminus, the 515-residue chain is 1-pyrroline-5-carboxylate dehydrogenase (515 aa).

Catalysis depends on residues glutamate 286 and cysteine 320.

The protein belongs to the aldehyde dehydrogenase family. RocA subfamily.

The enzyme catalyses L-glutamate 5-semialdehyde + NAD(+) + H2O = L-glutamate + NADH + 2 H(+). Its pathway is amino-acid degradation; L-proline degradation into L-glutamate; L-glutamate from L-proline: step 2/2. The sequence is that of 1-pyrroline-5-carboxylate dehydrogenase from Bacillus cytotoxicus (strain DSM 22905 / CIP 110041 / 391-98 / NVH 391-98).